A 354-amino-acid polypeptide reads, in one-letter code: Uroporphyrinogen decarboxylase (354 aa).

Substrate contacts are provided by residues Arg27–Arg31, Asp77, Tyr154, Thr209, and His327.

The protein belongs to the uroporphyrinogen decarboxylase family. Homodimer.

Its subcellular location is the cytoplasm. It catalyses the reaction uroporphyrinogen III + 4 H(+) = coproporphyrinogen III + 4 CO2. It functions in the pathway porphyrin-containing compound metabolism; protoporphyrin-IX biosynthesis; coproporphyrinogen-III from 5-aminolevulinate: step 4/4. Functionally, catalyzes the decarboxylation of four acetate groups of uroporphyrinogen-III to yield coproporphyrinogen-III. This is Uroporphyrinogen decarboxylase from Actinobacillus succinogenes (strain ATCC 55618 / DSM 22257 / CCUG 43843 / 130Z).